The following is a 1344-amino-acid chain: Xanthine dehydrogenase (1344 aa).

In terms of domain architecture, 2Fe-2S ferredoxin-type spans 9-96 (SVLVFFVNGK…GCAVTTVEGI (88 aa)). [2Fe-2S] cluster is bound by residues Cys48, Cys53, Cys56, Cys78, Cys118, Cys121, Cys153, and Cys155. The 190-residue stretch at 236–425 (FSSERVTWYR…LGIHFQKTTP (190 aa)) folds into the FAD-binding PCMH-type domain. Residues 264-271 (LVVGNTEV), Phe344, 354-358 (CLGGN), Asp367, Leu415, and Lys433 contribute to the FAD site. Mo-molybdopterin is bound by residues Gln781 and Phe812. Residues Glu816 and Arg894 each contribute to the substrate site. Arg926 contacts Mo-molybdopterin. A substrate-binding site is contributed by Phe928. A Mo-molybdopterin-binding site is contributed by Ala1093. The Proton acceptor role is filled by Glu1276.

Belongs to the xanthine dehydrogenase family. As to quaternary structure, homodimer. It depends on FAD as a cofactor. The cofactor is Mo-molybdopterin. Requires [2Fe-2S] cluster as cofactor.

It localises to the peroxisome. The catalysed reaction is xanthine + NAD(+) + H2O = urate + NADH + H(+). The enzyme catalyses hypoxanthine + NAD(+) + H2O = xanthine + NADH + H(+). In terms of biological role, key enzyme in purine degradation. Catalyzes the oxidation of hypoxanthine to xanthine. Catalyzes the oxidation of xanthine to uric acid. The sequence is that of Xanthine dehydrogenase (Xdh) from Drosophila subobscura (Fruit fly).